The primary structure comprises 64 residues: UPF0434 protein Bmul_0750/BMULJ_02510 (64 aa).

Belongs to the UPF0434 family.

The sequence is that of UPF0434 protein Bmul_0750/BMULJ_02510 from Burkholderia multivorans (strain ATCC 17616 / 249).